The primary structure comprises 695 residues: NADPH--cytochrome P450 reductase (695 aa).

Over 1–8 the chain is Lumenal; it reads MAQLDTLD. Residues 9 to 31 form a helical membrane-spanning segment; that stretch reads IVVLVVLLVGSVAYFTKGSYWAV. Residues 32–695 lie on the Cytoplasmic side of the membrane; it reads PKDPYAAANS…SGSYQEDVWS (664 aa). Residues 66 to 221 enclose the Flavodoxin-like domain; it reads CVIFYGSQTG…DFLAWKEPMW (156 aa). FMN contacts are provided by residues 72 to 77, 123 to 126, 169 to 178, and Asp204; these read SQTGTA, ATYG, and LGNNTYEHYN. Residues 277-538 form the FAD-binding FR-type domain; the sequence is HNPYIAPIVE…HVRHSNFKLP (262 aa). Residue Arg296 participates in NADP(+) binding. Residues 451-454, 469-471, and 486-489 contribute to the FAD site; these read RYYS, TAV, and GVTT. Residues Thr552, 614–615, 620–624, and Glu656 contribute to the NADP(+) site; these read SR and KVYVQ. An FAD-binding site is contributed by Trp694.

Belongs to the NADPH--cytochrome P450 reductase family. It in the N-terminal section; belongs to the flavodoxin family. This sequence in the C-terminal section; belongs to the flavoprotein pyridine nucleotide cytochrome reductase family. The cofactor is FAD. FMN serves as cofactor.

Its subcellular location is the endoplasmic reticulum membrane. It localises to the mitochondrion outer membrane. It is found in the cell membrane. It carries out the reaction 2 oxidized [cytochrome P450] + NADPH = 2 reduced [cytochrome P450] + NADP(+) + H(+). Functionally, this enzyme is required for electron transfer from NADP to cytochrome P450 in microsomes. It can also provide electron transfer to heme oxygenase and cytochrome B5. Involved in ergosterol biosynthesis. This is NADPH--cytochrome P450 reductase from Aspergillus fumigatus (strain ATCC MYA-4609 / CBS 101355 / FGSC A1100 / Af293) (Neosartorya fumigata).